The following is a 232-amino-acid chain: GFP-like non-fluorescent chromoprotein FP595 (232 aa).

Positions 63–65 form a cross-link, 2-iminomethyl-5-imidazolinone (Met-Gly); it reads MYG. Tyr64 is modified ((E)-2,3-didehydrotyrosine).

This sequence belongs to the GFP family. Post-translationally, contains a chromophore consisting of modified amino acid residues. The chromophore is formed by autocatalytic backbone condensation between Xaa-N and Gly-(N+2), oxidation of Tyr-(N+1) to didehydrotyrosine, and formation of a double bond to the alpha-amino nitrogen of residue Tyr-(N+1). Maturation of the chromophore requires nothing other than molecular oxygen. As to expression, tentacle tips.

In terms of biological role, pigment protein that is intensely purple in color. In Anemonia sulcata (Mediterranean snakelocks sea anemone), this protein is GFP-like non-fluorescent chromoprotein FP595.